The sequence spans 122 residues: Large ribosomal subunit protein uL14 (122 aa).

The protein belongs to the universal ribosomal protein uL14 family. In terms of assembly, part of the 50S ribosomal subunit. Forms a cluster with proteins L3 and L19. In the 70S ribosome, L14 and L19 interact and together make contacts with the 16S rRNA in bridges B5 and B8.

Its function is as follows. Binds to 23S rRNA. Forms part of two intersubunit bridges in the 70S ribosome. This Chlamydia trachomatis serovar L2 (strain ATCC VR-902B / DSM 19102 / 434/Bu) protein is Large ribosomal subunit protein uL14.